Reading from the N-terminus, the 90-residue chain is Large ribosomal subunit protein eL34 (90 aa).

Cys-36, Cys-39, Cys-72, and Cys-75 together coordinate Zn(2+). Positions 41–72 are disordered; sequence RPLNGVPRGRPSELRKLPKTKKRPERPYPNLC.

It belongs to the eukaryotic ribosomal protein eL34 family. As to quaternary structure, part of the 50S ribosomal subunit. It depends on Zn(2+) as a cofactor.

The chain is Large ribosomal subunit protein eL34 from Thermococcus kodakarensis (strain ATCC BAA-918 / JCM 12380 / KOD1) (Pyrococcus kodakaraensis (strain KOD1)).